A 162-amino-acid polypeptide reads, in one-letter code: D-aminoacyl-tRNA deacylase (162 aa).

Residues 143–144 (GP) carry the Gly-cisPro motif, important for rejection of L-amino acids motif.

It belongs to the DTD family. Homodimer.

It is found in the cytoplasm. It carries out the reaction glycyl-tRNA(Ala) + H2O = tRNA(Ala) + glycine + H(+). It catalyses the reaction a D-aminoacyl-tRNA + H2O = a tRNA + a D-alpha-amino acid + H(+). An aminoacyl-tRNA editing enzyme that deacylates mischarged D-aminoacyl-tRNAs. Also deacylates mischarged glycyl-tRNA(Ala), protecting cells against glycine mischarging by AlaRS. Acts via tRNA-based rather than protein-based catalysis; rejects L-amino acids rather than detecting D-amino acids in the active site. By recycling D-aminoacyl-tRNA to D-amino acids and free tRNA molecules, this enzyme counteracts the toxicity associated with the formation of D-aminoacyl-tRNA entities in vivo and helps enforce protein L-homochirality. This is D-aminoacyl-tRNA deacylase from Nitratidesulfovibrio vulgaris (strain ATCC 29579 / DSM 644 / CCUG 34227 / NCIMB 8303 / VKM B-1760 / Hildenborough) (Desulfovibrio vulgaris).